A 1479-amino-acid chain; its full sequence is C-type mannose receptor 2 (1479 aa).

Residues 1-30 (MVPIRPALAPWPRHLLRCVLLLGGLRLGHP) form the signal peptide. Residues 31 to 1413 (ADSAAALLEP…SAALPESPVA (1383 aa)) lie on the Extracellular side of the membrane. Positions 37–190 (LLEPDVFLIF…SHGKPCTIPF (154 aa)) constitute a Ricin B-type lectin domain. Cys92 and Cys111 are oxidised to a cystine. 2 N-linked (GlcNAc...) asparagine glycosylation sites follow: Asn101 and Asn139. Residues 181 to 229 (SHGKPCTIPFKYDNQWFHGCTSTGREDGHLWCATTQDYGKDERWGFCPI) enclose the Fibronectin type-II domain. 4 disulfide bridges follow: Cys186–Cys212, Cys200–Cys227, Cys265–Cys358, and Cys334–Cys350. A C-type lectin 1 domain is found at 243-359 (LTDSCYQFNF…CSIALPYVCK (117 aa)). Residue Asn363 is glycosylated (N-linked (GlcNAc...) asparagine). C-type lectin domains follow at residues 388-504 (FQGH…SICK), 527-643 (HSPS…RYIC), 677-808 (KLRH…WICK), 831-950 (FQEA…YICK), 978-1106 (FLNK…GFIC), 1131-1242 (YLNH…GAVC), and 1271-1391 (FREH…GVVC). 7 cysteine pairs are disulfide-bonded: Cys409–Cys503, Cys480–Cys495, Cys617–Cys634, Cys703–Cys807, Cys784–Cys799, Cys852–Cys949, and Cys926–Cys941. The N-linked (GlcNAc...) asparagine glycan is linked to Asn1028. Cys1077 and Cys1097 are oxidised to a cystine. Lys1141 participates in a covalent cross-link: Glycyl lysine isopeptide (Lys-Gly) (interchain with G-Cter in SUMO1). Cys1219 and Cys1233 form a disulfide bridge. The N-linked (GlcNAc...) asparagine glycan is linked to Asn1348. Cys1367 and Cys1382 form a disulfide bridge. Residues 1414-1434 (LVVVLTAVLLLLALMTAALIL) form a helical membrane-spanning segment. Over 1435-1479 (YRRRQSAERGSFEGARYSRSSHSGPAEATEKNILVSDMEMNEQQE) the chain is Cytoplasmic. Residues 1446-1479 (FEGARYSRSSHSGPAEATEKNILVSDMEMNEQQE) form a disordered region.

Interacts directly with PLAUR/UPAR and PLAU/pro-UPA to form a tri-molecular complex. Interacts with collagen V and with C-terminal region of type I collagen/COL1A1. Post-translationally, phosphorylated. As to expression, highly expressed in heart, lung and kidney, but little or no expression in brain, thymus or adult liver. Expressed at highly endothelialized sites such as those in choroid plexus and kidney glomerulai as well as in chondrocytes in cartilaginous regions of the embryo.

It localises to the membrane. In terms of biological role, may play a role as endocytotic lectin receptor displaying calcium-dependent lectin activity. Internalizes glycosylated ligands from the extracellular space for release in an endosomal compartment via clathrin-mediated endocytosis. May be involved in plasminogen activation system controlling the extracellular level of PLAUR/PLAU, and thus may regulate protease activity at the cell surface. May contribute to cellular uptake, remodeling and degradation of extracellular collagen matrices. May participate in remodeling of extracellular matrix cooperating with the matrix metalloproteinases (MMPs). In Mus musculus (Mouse), this protein is C-type mannose receptor 2 (Mrc2).